Consider the following 593-residue polypeptide: Aspartate--tRNA ligase (593 aa).

Glutamate 173 serves as a coordination point for L-aspartate. An aspartate region spans residues 197-200 (QLFK). L-aspartate is bound at residue arginine 219. ATP contacts are provided by residues 219 to 221 (RDE) and glutamine 228. Histidine 448 lines the L-aspartate pocket. Residue glutamate 482 coordinates ATP. Residue arginine 489 participates in L-aspartate binding. ATP is bound at residue 534 to 537 (GLDR).

Belongs to the class-II aminoacyl-tRNA synthetase family. Type 1 subfamily. In terms of assembly, homodimer.

It is found in the cytoplasm. The catalysed reaction is tRNA(Asp) + L-aspartate + ATP = L-aspartyl-tRNA(Asp) + AMP + diphosphate. Catalyzes the attachment of L-aspartate to tRNA(Asp) in a two-step reaction: L-aspartate is first activated by ATP to form Asp-AMP and then transferred to the acceptor end of tRNA(Asp). This is Aspartate--tRNA ligase from Shewanella denitrificans (strain OS217 / ATCC BAA-1090 / DSM 15013).